Consider the following 305-residue polypeptide: Glycine--tRNA ligase alpha subunit (305 aa).

This sequence belongs to the class-II aminoacyl-tRNA synthetase family. In terms of assembly, tetramer of two alpha and two beta subunits.

The protein localises to the cytoplasm. The enzyme catalyses tRNA(Gly) + glycine + ATP = glycyl-tRNA(Gly) + AMP + diphosphate. This is Glycine--tRNA ligase alpha subunit from Streptococcus pyogenes serotype M2 (strain MGAS10270).